We begin with the raw amino-acid sequence, 328 residues long: MKNQWNNILSIGEKVLNGEKITADEALTLSKSNGSDIFLLCSFANKLREKFNGNHVDLCSVINAKSGNCSEDCAFCAQSAHHKANVSCYPLLNEDKILEMAKQREAYGARHCDIATSGLGYTGDEKDFQTILKAFKKMKENTNLKLCACLGTLTEKAMNSLAAVGVERYNHNLETAKSFYKNIVSTHGYDERIKTINYAKNAKMEVCSGMIVGLGETMEQRIEHALLLRDLNVDAVPVNILNPVKGTKLENAKPLSPMEIIKTFAIIRFILPDKIIRYAGGREKNLRSLQPLGFLSGLNGMLIGNYLTTNGQSVNDDFNMLKDLELEY.

The 232-residue stretch at 51 to 282 (FNGNHVDLCS…DKIIRYAGGR (232 aa)) folds into the Radical SAM core domain. [4Fe-4S] cluster-binding residues include C69, C73, and C76. [2Fe-2S] cluster is bound by residues C112, C147, C207, and R277.

It belongs to the radical SAM superfamily. Biotin synthase family. As to quaternary structure, homodimer. It depends on [4Fe-4S] cluster as a cofactor. The cofactor is [2Fe-2S] cluster.

The enzyme catalyses (4R,5S)-dethiobiotin + (sulfur carrier)-SH + 2 reduced [2Fe-2S]-[ferredoxin] + 2 S-adenosyl-L-methionine = (sulfur carrier)-H + biotin + 2 5'-deoxyadenosine + 2 L-methionine + 2 oxidized [2Fe-2S]-[ferredoxin]. It participates in cofactor biosynthesis; biotin biosynthesis; biotin from 7,8-diaminononanoate: step 2/2. In terms of biological role, catalyzes the conversion of dethiobiotin (DTB) to biotin by the insertion of a sulfur atom into dethiobiotin via a radical-based mechanism. In Clostridium acetobutylicum (strain ATCC 824 / DSM 792 / JCM 1419 / IAM 19013 / LMG 5710 / NBRC 13948 / NRRL B-527 / VKM B-1787 / 2291 / W), this protein is Biotin synthase.